The following is a 173-amino-acid chain: Co-chaperone protein HscB homolog (173 aa).

The J domain occupies 5 to 77 (CHFALFDLQP…PRRARYLLAI (73 aa)).

The protein belongs to the HscB family. As to quaternary structure, interacts with HscA and stimulates its ATPase activity.

Functionally, co-chaperone involved in the maturation of iron-sulfur cluster-containing proteins. Seems to help targeting proteins to be folded toward HscA. This Pseudomonas putida (strain W619) protein is Co-chaperone protein HscB homolog.